Here is a 367-residue protein sequence, read N- to C-terminus: Diphthine methyltransferase homolog (367 aa).

4 WD repeats span residues 84–124, 132–173, 180–220, and 234–274; these read NFNS…KKLE, SLSN…SKVT, AHDY…NHND, and RCDM…QPII.

It belongs to the DPH7 family.

It catalyses the reaction diphthine methyl ester-[translation elongation factor 2] + H2O = diphthine-[translation elongation factor 2] + methanol + H(+). The protein operates within protein modification; peptidyl-diphthamide biosynthesis. Its function is as follows. Catalyzes the demethylation of diphthine methyl ester to form diphthine, an intermediate diphthamide biosynthesis, a post-translational modification of histidine which occurs in translation elongation factor 2 (efbA). The polypeptide is Diphthine methyltransferase homolog (wdr85) (Dictyostelium discoideum (Social amoeba)).